We begin with the raw amino-acid sequence, 168 residues long: Phosphopantetheine adenylyltransferase (168 aa).

Thr-10 is a substrate binding site. ATP-binding positions include 10–11 (TF) and His-18. The substrate site is built by Lys-42, Leu-74, and Arg-88. ATP is bound by residues 89-91 (GLR), Glu-99, and 124-130 (NSFISST).

This sequence belongs to the bacterial CoaD family. In terms of assembly, homohexamer. The cofactor is Mg(2+).

Its subcellular location is the cytoplasm. It carries out the reaction (R)-4'-phosphopantetheine + ATP + H(+) = 3'-dephospho-CoA + diphosphate. The protein operates within cofactor biosynthesis; coenzyme A biosynthesis; CoA from (R)-pantothenate: step 4/5. Its function is as follows. Reversibly transfers an adenylyl group from ATP to 4'-phosphopantetheine, yielding dephospho-CoA (dPCoA) and pyrophosphate. This chain is Phosphopantetheine adenylyltransferase, found in Shewanella denitrificans (strain OS217 / ATCC BAA-1090 / DSM 15013).